Consider the following 236-residue polypeptide: Regulatory protein cys-3 (236 aa).

Residues 26-89 (TLGQLQPIQP…MSVPPTPGAR (64 aa)) form a disordered region. The segment covering 28–37 (GQLQPIQPNP) has biased composition (polar residues). Residues 99-162 (LAAEEDKRKR…KWLKGLVTEK (64 aa)) enclose the bZIP domain. A basic motif region spans residues 105-137 (KRKRNTAASARFRIKKKQREQALEKSAKEMSEK). Residues 141–155 (LEGRIQALETENKWL) are leucine-zipper. The interval 189 to 236 (AAAADKAEAAADKADAERAREESSFCVSTSSPSSDESVDTDNKKRRKD) is disordered. Over residues 193-211 (DKAEAAADKADAERAREES) the composition is skewed to basic and acidic residues. The span at 212 to 223 (SFCVSTSSPSSD) shows a compositional bias: low complexity.

This sequence belongs to the bZIP family. GCN4 subfamily. In terms of assembly, binds DNA as a dimer.

It localises to the nucleus. Functionally, turns on the expression of structural genes which encode sulfur-catabolic enzymes. Binds to sequence elements upstream of these genes. This Neurospora crassa (strain ATCC 24698 / 74-OR23-1A / CBS 708.71 / DSM 1257 / FGSC 987) protein is Regulatory protein cys-3 (cys-3).